We begin with the raw amino-acid sequence, 375 residues long: Aminomethyltransferase (375 aa).

It belongs to the GcvT family. The glycine cleavage system is composed of four proteins: P, T, L and H.

The enzyme catalyses N(6)-[(R)-S(8)-aminomethyldihydrolipoyl]-L-lysyl-[protein] + (6S)-5,6,7,8-tetrahydrofolate = N(6)-[(R)-dihydrolipoyl]-L-lysyl-[protein] + (6R)-5,10-methylene-5,6,7,8-tetrahydrofolate + NH4(+). In terms of biological role, the glycine cleavage system catalyzes the degradation of glycine. The protein is Aminomethyltransferase of Ralstonia pickettii (strain 12J).